The sequence spans 399 residues: Polypyrimidine tract-binding protein homolog 1 (399 aa).

N-acetylserine is present on serine 2. RRM domains lie at 17 to 95 (KVVH…YSNR), 109 to 196 (GNVL…YSAH), and 242 to 322 (SNVL…YSRH). The segment at 352–399 (AVSGSAPPAGWQNPQAQSQYSGYGGSPYMYPSSDPNGASPSGQPPYYG) is disordered. Over residues 365-384 (PQAQSQYSGYGGSPYMYPSS) the composition is skewed to low complexity.

Its subcellular location is the nucleus. Its function is as follows. Plays a role in pre-mRNA splicing. Binds to the polypyrimidine tract of introns. May promote the binding of U2 snRNP to pre-mRNA. In Arabidopsis thaliana (Mouse-ear cress), this protein is Polypyrimidine tract-binding protein homolog 1 (PTB).